Reading from the N-terminus, the 377-residue chain is Flap endonuclease 1 (377 aa).

The segment at 1-105 (MGIKGLNAII…HELSKRTARR (105 aa)) is N-domain. Position 34 (Asp-34) interacts with Mg(2+). DNA is bound by residues Arg-47 and Arg-71. Residue Asp-87 coordinates Mg(2+). A disordered region spans residues 99 to 119 (SKRTARREETEKKLQEATDQA). Positions 120–251 (EKMKQERRLV…VTALKLIKEY (132 aa)) are I-domain. Mg(2+) is bound by residues Glu-156, Glu-158, Asp-177, and Asp-179. Glu-156 provides a ligand contact to DNA. The DNA site is built by Gly-229 and Asp-231. Asp-231 contacts Mg(2+). The tract at residues 338–346 (VQGRLDGFF) is interaction with PCNA.

This sequence belongs to the XPG/RAD2 endonuclease family. FEN1 subfamily. As to quaternary structure, interacts with PCNA. Three molecules of FEN1 bind to one PCNA trimer with each molecule binding to one PCNA monomer. PCNA stimulates the nuclease activity without altering cleavage specificity. Requires Mg(2+) as cofactor. Post-translationally, phosphorylated. Phosphorylation upon DNA damage induces relocalization to the nuclear plasma.

The protein localises to the nucleus. It is found in the nucleolus. It localises to the nucleoplasm. Its subcellular location is the mitochondrion. In terms of biological role, structure-specific nuclease with 5'-flap endonuclease and 5'-3' exonuclease activities involved in DNA replication and repair. During DNA replication, cleaves the 5'-overhanging flap structure that is generated by displacement synthesis when DNA polymerase encounters the 5'-end of a downstream Okazaki fragment. It enters the flap from the 5'-end and then tracks to cleave the flap base, leaving a nick for ligation. Also involved in the long patch base excision repair (LP-BER) pathway, by cleaving within the apurinic/apyrimidinic (AP) site-terminated flap. Acts as a genome stabilization factor that prevents flaps from equilibrating into structures that lead to duplications and deletions. Also possesses 5'-3' exonuclease activity on nicked or gapped double-stranded DNA, and exhibits RNase H activity. Also involved in replication and repair of rDNA and in repairing mitochondrial DNA. This Vanderwaltozyma polyspora (strain ATCC 22028 / DSM 70294 / BCRC 21397 / CBS 2163 / NBRC 10782 / NRRL Y-8283 / UCD 57-17) (Kluyveromyces polysporus) protein is Flap endonuclease 1.